The sequence spans 71 residues: Phosphatidylinositol N-acetylglucosaminyltransferase subunit Y (71 aa).

Topologically, residues 1–3 (MFL) are cytoplasmic. The helical transmembrane segment at 4 to 26 (SLPTLTVLIPLVSLAGLFYSASV) threads the bilayer. Topologically, residues 27-44 (EENFPQGCTSTASLCFYS) are lumenal. Residues 45 to 65 (LLLPITIPVYVFFHLWTWMGI) traverse the membrane as a helical segment. Residues 66-71 (KLFRHN) are Cytoplasmic-facing.

Component of the glycosylphosphatidylinositol-N-acetylglucosaminyltransferase (GPI-GnT) complex composed at least by PIGA, PIGC, PIGH, PIGP, PIGQ, PIGY and DPM2. Interacts directly with PIGA; this interaction regulates glycosylphosphatidylinositol-N-acetylglucosaminyltransferase activity. Does not interact with Ras proteins.

Its subcellular location is the endoplasmic reticulum membrane. It participates in glycolipid biosynthesis; glycosylphosphatidylinositol-anchor biosynthesis. Functionally, part of the glycosylphosphatidylinositol-N-acetylglucosaminyltransferase (GPI-GnT) complex that catalyzes the transfer of N-acetylglucosamine from UDP-N-acetylglucosamine to phosphatidylinositol and participates in the first step of GPI biosynthesis. May act by regulating the catalytic subunit PIGA. The polypeptide is Phosphatidylinositol N-acetylglucosaminyltransferase subunit Y (Homo sapiens (Human)).